The sequence spans 130 residues: Immunoglobulin kappa chain variable 9-120 (130 aa).

Residues Met1–Cys22 form the signal peptide. The framework-1 stretch occupies residues Asp23–Cys45. The cysteines at positions 45 and 110 are disulfide-linked. The interval Arg46–Asn56 is complementarity-determining-1. The interval Trp57–Tyr71 is framework-2. Residues Ala72–Ser78 form a complementarity-determining-2 region. A framework-3 region spans residues Gly79–Cys110. The complementarity-determining-3 stretch occupies residues Leu111–Thr119. The framework-4 stretch occupies residues Phe120–Lys129.

The sequence is that of Immunoglobulin kappa chain variable 9-120 from Mus musculus (Mouse).